Consider the following 99-residue polypeptide: PE family protein PE13 (99 aa).

A PE domain is found at 1 to 93 (MSFVMAYPEM…ASSYAATEVA (93 aa)).

Belongs to the mycobacterial PE family.

It localises to the secreted. The protein localises to the cell wall. In terms of biological role, may play a pivotal role in the interaction between M.tuberculosis and host. Can enhance the survival within macrophages under stress conditions such as H(2)O(2), SDS and low pH. Increases the production of IL-6 and IL-1beta from macrophages, and decreases the secretion of suppressor of cytokine signaling 3 (SOCS-3). These changes probably involve the p38-ERK-NF-kappa-B signaling pathway. Also precipitates the macrophage death. The chain is PE family protein PE13 from Mycobacterium tuberculosis (strain ATCC 25618 / H37Rv).